The sequence spans 177 residues: Co-chaperone protein HscB homolog (177 aa).

One can recognise a J domain in the interval 8–80 (DFFALFGLPR…LPRAQYMLEL (73 aa)).

It belongs to the HscB family. Interacts with HscA and stimulates its ATPase activity.

Co-chaperone involved in the maturation of iron-sulfur cluster-containing proteins. Seems to help targeting proteins to be folded toward HscA. In Aromatoleum aromaticum (strain DSM 19018 / LMG 30748 / EbN1) (Azoarcus sp. (strain EbN1)), this protein is Co-chaperone protein HscB homolog.